The sequence spans 210 residues: Probable nicotinate-nucleotide adenylyltransferase (210 aa).

Belongs to the NadD family.

It catalyses the reaction nicotinate beta-D-ribonucleotide + ATP + H(+) = deamido-NAD(+) + diphosphate. It functions in the pathway cofactor biosynthesis; NAD(+) biosynthesis; deamido-NAD(+) from nicotinate D-ribonucleotide: step 1/1. In terms of biological role, catalyzes the reversible adenylation of nicotinate mononucleotide (NaMN) to nicotinic acid adenine dinucleotide (NaAD). The protein is Probable nicotinate-nucleotide adenylyltransferase of Streptococcus pyogenes serotype M3 (strain ATCC BAA-595 / MGAS315).